We begin with the raw amino-acid sequence, 761 residues long: Ribonucleoside-diphosphate reductase subunit alpha (761 aa).

Residues 5 to 95 (LFVTKRDGRK…IFHLRKKAYG (91 aa)) enclose the ATP-cone domain. Residues K9, 15–21 (EKINLDK), T55, and K91 contribute to the ATP site. T209 is a binding site for GDP. The cysteines at positions 225 and 462 are disulfide-linked. Residues 232–234 (DSL), R262, and R269 each bind dTTP. A GDP-binding site is contributed by N437. The Proton acceptor role is filled by N437. The active-site Cysteine radical intermediate is C439. Residues E441 and 623–625 (ETS) each bind GDP. The active-site Proton acceptor is the E441.

The protein belongs to the ribonucleoside diphosphate reductase large chain family. In terms of assembly, tetramer of two alpha and two beta subunits.

It catalyses the reaction a 2'-deoxyribonucleoside 5'-diphosphate + [thioredoxin]-disulfide + H2O = a ribonucleoside 5'-diphosphate + [thioredoxin]-dithiol. Under complex allosteric control mediated by deoxynucleoside triphosphates and ATP binding to separate specificity and activation sites on the alpha subunit. The type of nucleotide bound at the specificity site determines substrate preference. It seems probable that ATP makes the enzyme reduce CDP and UDP, dGTP favors ADP reduction and dTTP favors GDP reduction. Stimulated by ATP and inhibited by dATP binding to the activity site. Functionally, provides the precursors necessary for DNA synthesis. Catalyzes the biosynthesis of deoxyribonucleotides from the corresponding ribonucleotides. The sequence is that of Ribonucleoside-diphosphate reductase subunit alpha (nrdA) from Buchnera aphidicola subsp. Acyrthosiphon pisum (strain APS) (Acyrthosiphon pisum symbiotic bacterium).